Reading from the N-terminus, the 195-residue chain is MLRKKFENTKIILASGSPRRQEFFKNLDLDFEVRLKEIEEIFPKTLQSLEITDYLAKLKASAFDGDLLQNELLVTSDTLVWLQNEALGKPKDYDDAFAMLQKLSNQTHEVITSVCFKTKNKTEIINDITQVTFGKLSDEAIKYYLDNYKPFDKAGSYGIQEWIGLIGITNIHGSYTNVVGLPTEKVYLYLLNHTF.

The active-site Proton acceptor is D77.

Belongs to the Maf family. YhdE subfamily. A divalent metal cation is required as a cofactor.

The protein localises to the cytoplasm. It catalyses the reaction dTTP + H2O = dTMP + diphosphate + H(+). The catalysed reaction is UTP + H2O = UMP + diphosphate + H(+). Functionally, nucleoside triphosphate pyrophosphatase that hydrolyzes dTTP and UTP. May have a dual role in cell division arrest and in preventing the incorporation of modified nucleotides into cellular nucleic acids. The chain is dTTP/UTP pyrophosphatase from Flavobacterium psychrophilum (strain ATCC 49511 / DSM 21280 / CIP 103535 / JIP02/86).